Consider the following 550-residue polypeptide: uncharacterized protein (550 aa).

The signal sequence occupies residues 1–53; it reads MVVIANKGALWAYYCKRLLNSVTYMMYPLIRKRTMKKLLLIVGLLLACSTVMR. Residues N296 and N518 are each glycosylated (N-linked (GlcNAc...) asparagine).

It is found in the endoplasmic reticulum. This is an uncharacterized protein from Schizosaccharomyces pombe (strain 972 / ATCC 24843) (Fission yeast).